A 362-amino-acid polypeptide reads, in one-letter code: 3-dehydroquinate synthase (362 aa).

Residues 74–79 (DGEGYK), 108–112 (GVIGD), 132–133 (TT), Lys-145, Lys-154, and 172–175 (TLDT) each bind NAD(+). Zn(2+) contacts are provided by Glu-187, His-250, and His-267.

The protein belongs to the sugar phosphate cyclases superfamily. Dehydroquinate synthase family. Co(2+) serves as cofactor. The cofactor is Zn(2+). Requires NAD(+) as cofactor.

The protein localises to the cytoplasm. The enzyme catalyses 7-phospho-2-dehydro-3-deoxy-D-arabino-heptonate = 3-dehydroquinate + phosphate. It participates in metabolic intermediate biosynthesis; chorismate biosynthesis; chorismate from D-erythrose 4-phosphate and phosphoenolpyruvate: step 2/7. Its function is as follows. Catalyzes the conversion of 3-deoxy-D-arabino-heptulosonate 7-phosphate (DAHP) to dehydroquinate (DHQ). The protein is 3-dehydroquinate synthase of Geobacter sp. (strain M21).